The chain runs to 759 residues: Hormone-sensitive lipase (759 aa).

The Involved in the stabilization of the negatively charged intermediate by the formation of the oxyanion hole signature appears at His349–Gly351. Residue Ser423 is part of the active site. Residues Gly534–Ser553 are disordered. Position 557 is a phosphoserine (Ser557). Ser559 bears the Phosphoserine; by AMPK mark. Thr574 is modified (phosphothreonine). The interval Leu583 to Ser604 is disordered. Positions Asn585–Ser604 are enriched in polar residues. Phosphoserine is present on residues Ser597, Ser618, Ser650, and Ser651. Residues Asp694 and His724 contribute to the active site.

It belongs to the 'GDXG' lipolytic enzyme family. In terms of assembly, monomer and homodimer. Interacts with CAVIN1 in the adipocyte cytoplasm. Interacts with PLIN5. Post-translationally, phosphorylation by AMPK reduces its translocation towards the lipid droplets.

Its subcellular location is the cell membrane. It is found in the membrane. The protein resides in the caveola. The protein localises to the cytoplasm. It localises to the cytosol. Its subcellular location is the lipid droplet. It catalyses the reaction a diacylglycerol + H2O = a monoacylglycerol + a fatty acid + H(+). It carries out the reaction a triacylglycerol + H2O = a diacylglycerol + a fatty acid + H(+). The catalysed reaction is a monoacylglycerol + H2O = glycerol + a fatty acid + H(+). The enzyme catalyses Hydrolyzes glycerol monoesters of long-chain fatty acids.. It catalyses the reaction cholesteryl (9Z-octadecenoate) + H2O = cholesterol + (9Z)-octadecenoate + H(+). It carries out the reaction all-trans-retinyl hexadecanoate + H2O = all-trans-retinol + hexadecanoate + H(+). The catalysed reaction is 1,2-di-(9Z-octadecenoyl)-glycerol + H2O = (9Z-octadecenoyl)-glycerol + (9Z)-octadecenoate + H(+). The enzyme catalyses 2-(5Z,8Z,11Z,14Z-eicosatetraenoyl)-glycerol + H2O = glycerol + (5Z,8Z,11Z,14Z)-eicosatetraenoate + H(+). It catalyses the reaction 1-(9Z-octadecenoyl)-glycerol + H2O = glycerol + (9Z)-octadecenoate + H(+). It carries out the reaction 2-(9Z-octadecenoyl)-glycerol + H2O = glycerol + (9Z)-octadecenoate + H(+). The catalysed reaction is 1-O-hexadecyl-2-acetyl-sn-glycerol + H2O = 1-O-hexadecyl-sn-glycerol + acetate + H(+). The enzyme catalyses 1,2-di-(9Z-octadecenoyl)-sn-glycerol + H2O = (9Z-octadecenoyl)-glycerol + (9Z)-octadecenoate + H(+). It catalyses the reaction 1,3-di-(9Z-octadecenoyl)-glycerol + H2O = 1-(9Z-octadecenoyl)-glycerol + (9Z)-octadecenoate + H(+). It carries out the reaction 1,2-di-(9Z-octadecenoyl)-glycerol + (9Z)-octadecenoate + H(+) = 1,2,3-tri-(9Z-octadecenoyl)-glycerol + H2O. The catalysed reaction is 2,3-di-(9Z)-octadecenoyl-sn-glycerol + H2O = 2-(9Z-octadecenoyl)-glycerol + (9Z)-octadecenoate + H(+). The enzyme catalyses 1,2,3-tri-(9Z-octadecenoyl)-glycerol + H2O = di-(9Z)-octadecenoylglycerol + (9Z)-octadecenoate + H(+). It catalyses the reaction 1,2-di-(9Z-octadecenoyl)-glycerol + H2O = 2-(9Z-octadecenoyl)-glycerol + (9Z)-octadecenoate + H(+). The protein operates within glycerolipid metabolism; triacylglycerol degradation. In terms of biological role, lipase with broad substrate specificity, catalyzing the hydrolysis of triacylglycerols (TAGs), diacylglycerols (DAGs), monoacylglycerols (MAGs), cholesteryl esters and retinyl esters. Shows a preferential hydrolysis of DAGs over TAGs and MAGs and of the fatty acid (FA) esters at the sn-1 and sn-2 positions of the glycerol backbone in TAGs. Preferentially hydrolyzes FA esters at the sn-3 position of the glycerol backbone in DAGs. Catalyzes the hydrolysis of 2-arachidonoylglycerol, an endocannabinoid and of 2-acetyl monoalkylglycerol ether, the penultimate precursor of the pathway for de novo synthesis of platelet-activating factor. In adipose tissue and heart, it primarily hydrolyzes stored triglycerides to free fatty acids, while in steroidogenic tissues, it principally converts cholesteryl esters to free cholesterol for steroid hormone production. The chain is Hormone-sensitive lipase (Lipe) from Mus musculus (Mouse).